The chain runs to 198 residues: V-type ATP synthase subunit E (198 aa).

It belongs to the V-ATPase E subunit family.

Its function is as follows. Produces ATP from ADP in the presence of a proton gradient across the membrane. This Acetivibrio thermocellus (strain ATCC 27405 / DSM 1237 / JCM 9322 / NBRC 103400 / NCIMB 10682 / NRRL B-4536 / VPI 7372) (Clostridium thermocellum) protein is V-type ATP synthase subunit E.